Reading from the N-terminus, the 200-residue chain is Putative 3-methyladenine DNA glycosylase (200 aa).

Belongs to the DNA glycosylase MPG family.

This is Putative 3-methyladenine DNA glycosylase from Rhodopseudomonas palustris (strain BisB18).